The chain runs to 415 residues: Thylakoid ADP,ATP carrier protein, chloroplastic (415 aa).

Residues 1–61 constitute a chloroplast transit peptide; it reads MGEEKSLLQF…NFASLSVAIR (61 aa). The next 5 helical transmembrane spans lie at 106–126, 182–207, 219–239, 273–293, and 309–329; these read IALL…AFAG, LPQV…KLFR, LGAG…LDVL, GPSL…FDLV, and LLTA…LDTI. 3 Solcar repeats span residues 113-205, 213-296, and 307-387; these read PKDA…YKKL, LSVL…VKKS, and SSLL…VKKL. Position 187 (Arg-187) interacts with ADP. Residue Arg-330 coordinates ADP. A helical transmembrane segment spans residues 362–388; the sequence is GFVPNALKSMPNSSIKLTTFDIVKKLI.

This sequence belongs to the mitochondrial carrier (TC 2.A.29) family. As to expression, highly expressed in developing photosynthetic organs such as leaves, flower buds and green siliques. Also detected in roots, flowers, mature leaves and stems.

It localises to the plastid. The protein resides in the chloroplast thylakoid membrane. The protein localises to the chloroplast envelope. KM and Vmax values toward ATP only are increased by m-chlorocarbonyl cyanide phenylhydrazone (CCCP). The corresponding values for ADP are not affected. Its function is as follows. Specifically transports adenine nucleotides. Involved in the uptake of ATP into thylakoids in exchange for lumenal ADP. The protein is Thylakoid ADP,ATP carrier protein, chloroplastic (TAAC) of Arabidopsis thaliana (Mouse-ear cress).